A 1142-amino-acid chain; its full sequence is Serine/threonine-protein kinase dst2 (1142 aa).

In terms of domain architecture, Protein kinase spans 20–276; sequence FELIEEIAEG…ATELLKHPFV (257 aa). Residues 26–34 and lysine 49 each bind ATP; that span reads IAEGSFGTV. Aspartate 141 acts as the Proton acceptor in catalysis. The span at 300 to 322 shows a compositional bias: acidic residues; the sequence is LEEGGDEDEDSSEQEGMDSDDKD. Disordered stretches follow at residues 300–492, 515–636, 744–768, 939–974, and 1040–1142; these read LEEG…KTLE, KKQQ…KSTP, ETNHLKERQVTETEQHIKQMTTEQR, SIEEQQKERLTLQQEEHRIQQESLKKQEQKKKGSVT, and EEQK…DNQD. The segment covering 323 to 336 has biased composition (basic and acidic residues); sequence SDLKKSVGTSDRKS. Positions 355 to 365 are enriched in polar residues; it reads QRKSTGQNLQL. The span at 371 to 390 shows a compositional bias: low complexity; sequence QQSSSSSSSSSSSLSSQSLQ. Polar residues predominate over residues 391–413; that stretch reads PQAVNKSTDRLSANINGSNTKSN. Residues 421-452 show a composition bias toward low complexity; it reads AAASASASSLNLSTGNLQQSLSGSGSITTNSG. Over residues 467-477 the composition is skewed to basic and acidic residues; it reads SSDDRSPDIRT. Residues 541 to 554 show a composition bias toward low complexity; that stretch reads KQNAAKATQQQKQS. 4 stretches are compositionally biased toward basic and acidic residues: residues 555 to 588, 597 to 635, 744 to 760, and 939 to 969; these read AAKEEKIQKQHKVEKETLSRQQKADREQLLKKNQ, KVTDQQKQQQREFKDQQKQQQKQKEHEFKDQNKVLDKST, ETNHLKERQVTETEQHI, and SIEEQQKERLTLQQEEHRIQQESLKKQEQKK. Residues 716 to 1050 are a coiled coil; the sequence is QEYHTVLREN…EQKKSKLKLK (335 aa). Low complexity predominate over residues 1068–1091; the sequence is TGTTPPSTSSNQKTLNNSNGASSN.

It belongs to the protein kinase superfamily. STE Ser/Thr protein kinase family. STE20 subfamily. Mg(2+) serves as cofactor.

The enzyme catalyses L-seryl-[protein] + ATP = O-phospho-L-seryl-[protein] + ADP + H(+). It carries out the reaction L-threonyl-[protein] + ATP = O-phospho-L-threonyl-[protein] + ADP + H(+). This Dictyostelium discoideum (Social amoeba) protein is Serine/threonine-protein kinase dst2.